Consider the following 131-residue polypeptide: Large ribosomal subunit protein uL24 (131 aa).

This sequence belongs to the universal ribosomal protein uL24 family. As to quaternary structure, part of the 50S ribosomal subunit.

Functionally, one of two assembly initiator proteins, it binds directly to the 5'-end of the 23S rRNA, where it nucleates assembly of the 50S subunit. In terms of biological role, located at the polypeptide exit tunnel on the outside of the subunit. The sequence is that of Large ribosomal subunit protein uL24 from Korarchaeum cryptofilum (strain OPF8).